We begin with the raw amino-acid sequence, 1644 residues long: Peroxisome proliferator-activated receptor gamma coactivator-related protein 1 (1644 aa).

7 disordered regions span residues 1–61 (MAAR…DSSF), 170–249 (PERD…EVAG), 429–616 (LTPK…TSPV), 646–761 (AADP…PETP), 773–884 (SAPA…QPPG), 978–1074 (STVS…EGVV), and 1322–1507 (AAPP…NDHY). The segment covering 12–22 (APPPTGGPGPD) has biased composition (pro residues). The segment covering 213-222 (SSPKLPSWRP) has biased composition (low complexity). S232 carries the post-translational modification Phosphoserine. The segment at 425 to 460 (IMESLTPKEPQSLPASASQGSQKVPRKGRKKKNKEQ) is necessary for interaction with CREB1 and NRF1 and for transcriptional coactivation. Positions 437-446 (LPASASQGSQ) are enriched in polar residues. Positions 448–457 (VPRKGRKKKN) are enriched in basic residues. Residues 475 to 496 (SSRGQSTVSAEVNSQAGSSQKQ) are compositionally biased toward polar residues. Residues 515-524 (RAWARAWAAA) are compositionally biased toward low complexity. S541 is modified (phosphoserine). Over residues 556 to 572 (ETSQANPTLSLNDSAQA) the composition is skewed to polar residues. The segment covering 691–702 (DHPKVVSPEGKD) has biased composition (basic and acidic residues). Positions 811-821 (MVSTHSEQVSS) are enriched in polar residues. Pro residues-rich tracts occupy residues 828–864 (VRPPPPPLPSVSPAGPIPSTVPAPLPPFPPSVPPLLP) and 874–884 (RLPPPPLQPPG). Residues S1059, S1393, and S1395 each carry the phosphoserine modification. A necessary for interaction with CREB1 and NRF1 region spans residues 1361 to 1432 (EASPCRSEMN…SSSSSVSSSS (72 aa)). Composition is skewed to low complexity over residues 1409 to 1433 (SRSVSSGSSRTSEASSSSSVSSSSR) and 1453 to 1489 (SSCSSSGRSRRCSSSSSSSSSSSSCSSRSRSPSVSPC). The RRM domain occupies 1523 to 1599 (RVVFIGKIPG…QPFDLCFGGR (77 aa)).

Interacts with CREB1 and NRF1. Expressed in liver, heart, skeletal muscle, kidney and white and brown adipose tissues.

It is found in the nucleus. Acts as a coactivator during transcriptional activation of nuclear genes related to mitochondrial biogenesis and cell growth. Involved in the transcription coactivation of CREB and NRF1 target genes. The protein is Peroxisome proliferator-activated receptor gamma coactivator-related protein 1 (Pprc1) of Mus musculus (Mouse).